Reading from the N-terminus, the 843-residue chain is Tetratricopeptide repeat protein 7B (843 aa).

One copy of the TPR 1 repeat lies at 97–131 (QESNLIMAKLNYVEGDYKEALNIYARVGLDDLPLT). Residues Ser-160 and Ser-202 each carry the phosphoserine modification. TPR repeat units follow at residues 219–252 (ETGL…VETR), 363–396 (SVVY…AFEE), 397–430 (FHLW…KPDD), 479–514 (TYSL…SPTD), 516–548 (QAAF…QGDD), and 549–582 (ANSL…YPEN). Residues Ser-625, Ser-629, Ser-630, Ser-673, Ser-677, Ser-678, and Ser-681 each carry the phosphoserine modification. 4 TPR repeats span residues 696–729 (AQIW…FPMS), 730–763 (HNVL…SPTH), 765–797 (KSMQ…NSTA), and 798–831 (HEVW…EASS).

As to quaternary structure, component of a phosphatidylinositol 4-kinase (PI4K) complex, composed of PI4KA, EFR3 (EFR3A or EFR3B), TTC7 (TTC7A or TTC7B) and HYCC (HYCC1 or HYCC2). Interacts with PI4KA, interaction is direct. Interacts with EFR3 (EFR3A or EFR3B), interaction is direct. Interacts with HYCC (HYCC1 or HYCC2), interaction is direct. Association with the PI4K complex is strongly reduced by TMEM150A.

Its subcellular location is the cytoplasm. The protein localises to the cytosol. The protein resides in the cell membrane. Component of a complex required to localize phosphatidylinositol 4-kinase (PI4K) to the plasma membrane. The complex acts as a regulator of phosphatidylinositol 4-phosphate (PtdIns(4)P) synthesis. In the complex, plays a central role in bridging PI4KA to EFR3B and HYCC1, via direct interactions. This Homo sapiens (Human) protein is Tetratricopeptide repeat protein 7B (TTC7B).